The following is a 284-amino-acid chain: GTP cyclohydrolase MptA (284 aa).

This sequence belongs to the GTP cyclohydrolase IV family. As to quaternary structure, homodimer. It depends on Fe(2+) as a cofactor.

It carries out the reaction GTP + H2O = 7,8-dihydroneopterin 2',3'-cyclic phosphate + formate + diphosphate + H(+). The protein operates within cofactor biosynthesis; 5,6,7,8-tetrahydromethanopterin biosynthesis. Converts GTP to 7,8-dihydro-D-neopterin 2',3'-cyclic phosphate, the first intermediate in the biosynthesis of coenzyme methanopterin. The polypeptide is GTP cyclohydrolase MptA (Thermoplasma volcanium (strain ATCC 51530 / DSM 4299 / JCM 9571 / NBRC 15438 / GSS1)).